The sequence spans 77 residues: Large ribosomal subunit protein uL29 (77 aa).

This sequence belongs to the universal ribosomal protein uL29 family.

This chain is Large ribosomal subunit protein uL29, found in Mycolicibacterium gilvum (strain PYR-GCK) (Mycobacterium gilvum (strain PYR-GCK)).